Here is a 160-residue protein sequence, read N- to C-terminus: uncharacterized protein (160 aa).

4 consecutive transmembrane segments (helical) span residues 7 to 27, 48 to 68, 95 to 115, and 121 to 141; these read IFLK…CIFL, LVFI…YQAF, AVTI…MAEI, and IIVI…FAAV.

The protein resides in the cell membrane. This is an uncharacterized protein from Bacillus subtilis (strain 168).